The chain runs to 532 residues: Cytochrome P450 monooxygenase pgmC (532 aa).

A helical transmembrane segment spans residues 15-32 (ISTLAVLIGFIALLTAWL). A heme-binding site is contributed by cysteine 438.

The protein belongs to the cytochrome P450 family. It depends on heme as a cofactor.

It is found in the membrane. The protein operates within pigment biosynthesis. It participates in secondary metabolite biosynthesis. Cytochrome P450 monooxygenase; part of the gene cluster that mediates the biosynthesis of pleosporalin A, ascomycone A, as well as a third cryptic naphthoquinone derived pigment, all responsible for the coloration of conidia. Involved in the oxidation of fusarubinaldehyde at C-9. PgmC has low substrate-specificity and is also able to use the pgmA product 3-acetonyl-1,6,8-trihydroxy-2-naphthaldehyde as a substrate. The pathway begins with the biosynthesis of the cyclized heptaketide 3-acetonyl-1,6,8-trihydroxy-2-naphthaldehyde by the NR-PKS pgmA. The C-6 hydroxyl group is further methylated by the O-methyltransferase pgmB to yield fusarubinaldehyde which is in turn oxidized by the cytochrome P450 monooxygenase pgmC at C-9. The C-1 hydroxyl group is then methylated spontaneously. Although pgmE, pgmD and pgmH are essential for the production of pleosporalin A, it is not the case for the 2 other final products and it remains difficult to assign a specific function to each enzyme. PgmF and pgmG seem not to be involved in pigment biosynthesis although they were regulated by the cluster-specific transcription factor pgmR. This chain is Cytochrome P450 monooxygenase pgmC, found in Aspergillus terreus (strain NIH 2624 / FGSC A1156).